The chain runs to 154 residues: 6,7-dimethyl-8-ribityllumazine synthase (154 aa).

Residues F22, A56–E58, and A80–I82 contribute to the 5-amino-6-(D-ribitylamino)uracil site. A85–T86 lines the (2S)-2-hydroxy-3-oxobutyl phosphate pocket. H88 serves as the catalytic Proton donor. F113 provides a ligand contact to 5-amino-6-(D-ribitylamino)uracil. R127 lines the (2S)-2-hydroxy-3-oxobutyl phosphate pocket.

It belongs to the DMRL synthase family. Forms an icosahedral capsid composed of 60 subunits, arranged as a dodecamer of pentamers.

The enzyme catalyses (2S)-2-hydroxy-3-oxobutyl phosphate + 5-amino-6-(D-ribitylamino)uracil = 6,7-dimethyl-8-(1-D-ribityl)lumazine + phosphate + 2 H2O + H(+). It functions in the pathway cofactor biosynthesis; riboflavin biosynthesis; riboflavin from 2-hydroxy-3-oxobutyl phosphate and 5-amino-6-(D-ribitylamino)uracil: step 1/2. In terms of biological role, catalyzes the formation of 6,7-dimethyl-8-ribityllumazine by condensation of 5-amino-6-(D-ribitylamino)uracil with 3,4-dihydroxy-2-butanone 4-phosphate. This is the penultimate step in the biosynthesis of riboflavin. The polypeptide is 6,7-dimethyl-8-ribityllumazine synthase (Anoxybacillus flavithermus (strain DSM 21510 / WK1)).